We begin with the raw amino-acid sequence, 181 residues long: Protein GrpE (181 aa).

Belongs to the GrpE family. In terms of assembly, homodimer.

The protein resides in the cytoplasm. In terms of biological role, participates actively in the response to hyperosmotic and heat shock by preventing the aggregation of stress-denatured proteins, in association with DnaK and GrpE. It is the nucleotide exchange factor for DnaK and may function as a thermosensor. Unfolded proteins bind initially to DnaJ; upon interaction with the DnaJ-bound protein, DnaK hydrolyzes its bound ATP, resulting in the formation of a stable complex. GrpE releases ADP from DnaK; ATP binding to DnaK triggers the release of the substrate protein, thus completing the reaction cycle. Several rounds of ATP-dependent interactions between DnaJ, DnaK and GrpE are required for fully efficient folding. This chain is Protein GrpE, found in Delftia acidovorans (strain DSM 14801 / SPH-1).